A 384-amino-acid chain; its full sequence is Chaperone protein DnaJ (384 aa).

A J domain is found at 4-68 (DFYEILGVSR…EKRQMYDQMG (65 aa)). Disordered stretches follow at residues 29-60 (REYHPDVSDDPDAEEKFKQAKKAKEVLTDEEK) and 73-131 (EQAE…GQDL). Basic and acidic residues predominate over residues 42–60 (EEKFKQAKKAKEVLTDEEK). Residues 80–101 (GAGGGGGRGGMGGDPFGGGAGG) show a composition bias toward gly residues. Residues 102-111 (FDMQDIFDQF) show a composition bias toward low complexity. The span at 112 to 121 (FGGGGRGGRG) shows a compositional bias: gly residues. The segment at 145 to 227 (GATKQLNVTR…CRGNGVVQND (83 aa)) adopts a CR-type zinc-finger fold. Positions 158, 161, 175, and 178 each coordinate Zn(2+). CXXCXGXG motif repeat units follow at residues 158–165 (CDDCDGAG), 175–182 (CPECNGQG), 201–208 (CRRCDGEG), and 215–222 (CSTCRGNG). Residues 160–191 (DCDGAGHPPGADSETCPECNGQGQTTQVQQTP) form a disordered region. Low complexity predominate over residues 180–190 (GQGQTTQVQQT). C201, C204, C215, and C218 together coordinate Zn(2+).

Belongs to the DnaJ family. Homodimer. Zn(2+) serves as cofactor.

The protein localises to the cytoplasm. Its function is as follows. Participates actively in the response to hyperosmotic and heat shock by preventing the aggregation of stress-denatured proteins and by disaggregating proteins, also in an autonomous, DnaK-independent fashion. Unfolded proteins bind initially to DnaJ; upon interaction with the DnaJ-bound protein, DnaK hydrolyzes its bound ATP, resulting in the formation of a stable complex. GrpE releases ADP from DnaK; ATP binding to DnaK triggers the release of the substrate protein, thus completing the reaction cycle. Several rounds of ATP-dependent interactions between DnaJ, DnaK and GrpE are required for fully efficient folding. Also involved, together with DnaK and GrpE, in the DNA replication of plasmids through activation of initiation proteins. This is Chaperone protein DnaJ from Haloarcula marismortui (strain ATCC 43049 / DSM 3752 / JCM 8966 / VKM B-1809) (Halobacterium marismortui).